Reading from the N-terminus, the 166-residue chain is Bile acid 7alpha-dehydratase (166 aa).

In terms of assembly, homodimer.

It catalyses the reaction 7alpha,12alpha-dihydroxy-3-oxochol-4-en-24-oyl-CoA = 12alpha-hydroxy-3-oxochola-4,6-dien-24-oyl-CoA + H2O. It carries out the reaction 7alpha-hydroxy-3-oxochol-4-en-24-oyl-CoA = 3-oxochol-4,6-dien-24-oyl-CoA + H2O. The enzyme catalyses 7alpha,12alpha-dihydroxy-3-oxochol-4-en-24-oate = 12alpha-hydroxy-3-oxochola-4,6-dien-24-oate + H2O. The catalysed reaction is 7alpha-hydroxy-3-oxochol-4-en-24-oate = 3-oxochola-4,6-dien-24-oate + H2O. It participates in lipid metabolism; bile acid biosynthesis. Functionally, functions in the bile acid 7alpha-dehydroxylation pathway, which forms secondary bile acids via the 7alpha-dehydroxylation of primary bile acids, and is carried out by intestinal anaerobic bacteria. Catalyzes the dehydration step in this pathway, yielding a 3-oxo-Delta(4,6)-bile acid-CoA intermediate. In vitro, can act on the free bile acids (non CoA-conjugated) 7-alpha,12-alpha-dihydroxy-3-oxochol-4-enoate and 7-alpha-hydroxy-3-oxochol-4-enoate, but not on 7-alpha,12-alpha-dihydroxy-3-oxo-5-beta-cholanate, 3-alpha,7-alpha,12-alpha-trihydroxy-5-beta-cholanate or 7-beta-hydroxy-3-oxochol-4-enoate. This is Bile acid 7alpha-dehydratase from Clostridium scindens (strain JCM 10418 / VPI 12708).